The sequence spans 527 residues: MAKPWGGVGAWALDAEREDEEREHAAAFPAPDPPAAAGGAASFPSLKEAVVAGGGKQKKKKGTTLSLSEFTTYGAAGAPRRVAPAEPKGLTPQEMMMLPTGPRERSEDELDRSRGFRSYGGDREPRGGGFDDDRRSSRDSDLDMPSRADESDNWGKNKSFSPAPTDSGRRDRLSGPSPLGRSDDIDNWSRDKKPLPSRYPSLGTGGGFRESSGGGFRESSGGGFRESSGGGFRDSPGPSDSDRWVRGAVPAPMTNNGDRPRLNLNPPKRDPSATPVPAAEVARSRPSPFGAAKPREEVLAEKGLDWRKMEGEIEKKTSRPTSSHSSRPNSAHSSRPGSPGSQVSAVGSEGAPRARPKVNPFGDAKPREVVLQEKGKDWRKIDLELEHRAVNRPESEEEKNLKEEINLLKVDLKEIEAIAGDGSEQAKEVSEKISQMEKQLDLLTVELDDKIRFGQRPSSGAGRAAAFPPASEEPHVAVAHMDRPRSRGGVETYPKPVEERWGFHGSRERGSFGGGGSSDRSSTRQGW.

2 disordered regions span residues 1–370 and 453–527; these read MAKP…REVV and FGQR…RQGW. Composition is skewed to low complexity over residues 35–45 and 74–85; these read AAAGGAASFPS and GAAGAPRRVAPA. Basic and acidic residues-rich tracts occupy residues 102–155 and 181–194; these read PRER…DNWG and RSDDIDNWSRDKKP. The Nuclear localization signal signature appears at 196–203; sequence PSRYPSLG. A compositionally biased stretch (gly residues) spans 203–232; it reads GTGGGFRESSGGGFRESSGGGFRESSGGGF. Residues 293–317 are compositionally biased toward basic and acidic residues; sequence KPREEVLAEKGLDWRKMEGEIEKKT. The span at 319-336 shows a compositional bias: low complexity; sequence RPTSSHSSRPNSAHSSRP. Basic and acidic residues-rich tracts occupy residues 472 to 485 and 496 to 510; these read EEPHVAVAHMDRPR and PVEERWGFHGSRERG. Over residues 518–527 the composition is skewed to low complexity; that stretch reads SDRSSTRQGW.

Belongs to the eIF-4 subunit B family. In terms of assembly, homodimer. Nonspherical monomer. mRNA-discriminating component of initiation complexes. In terms of processing, phosphorylated.

The protein localises to the nucleus. In terms of biological role, promotes the eIF4F and eIF4A RNA-dependent ATP-hydrolysis activity with different efficiency depending on mRNAs, thus providing mRNA discrimination during initiation of translation. This Triticum aestivum (Wheat) protein is Eukaryotic translation initiation factor 4B1.